Here is a 611-residue protein sequence, read N- to C-terminus: Elongation factor 4 (611 aa).

One can recognise a tr-type G domain in the interval 12–194; sequence SRIRNFSIIA…QIVEKVPAPA (183 aa). GTP contacts are provided by residues 24-29 and 141-144; these read DHGKST and NKID.

This sequence belongs to the TRAFAC class translation factor GTPase superfamily. Classic translation factor GTPase family. LepA subfamily.

Its subcellular location is the cell membrane. It carries out the reaction GTP + H2O = GDP + phosphate + H(+). Required for accurate and efficient protein synthesis under certain stress conditions. May act as a fidelity factor of the translation reaction, by catalyzing a one-codon backward translocation of tRNAs on improperly translocated ribosomes. Back-translocation proceeds from a post-translocation (POST) complex to a pre-translocation (PRE) complex, thus giving elongation factor G a second chance to translocate the tRNAs correctly. Binds to ribosomes in a GTP-dependent manner. The protein is Elongation factor 4 of Bacillus velezensis (strain DSM 23117 / BGSC 10A6 / LMG 26770 / FZB42) (Bacillus amyloliquefaciens subsp. plantarum).